The following is a 335-amino-acid chain: Eukaryotic translation initiation factor 3 subunit I (335 aa).

WD repeat units follow at residues 8–47 (GHER…RLGT), 50–91 (GHQG…KTWD), 145–184 (CAES…LLFN), 189–228 (EPDL…VMKT), and 286–325 (GHFG…FDFT).

Belongs to the eIF-3 subunit I family. As to quaternary structure, component of the eukaryotic translation initiation factor 3 (eIF-3) complex.

The protein resides in the cytoplasm. Its function is as follows. Component of the eukaryotic translation initiation factor 3 (eIF-3) complex, which is involved in protein synthesis of a specialized repertoire of mRNAs and, together with other initiation factors, stimulates binding of mRNA and methionyl-tRNAi to the 40S ribosome. The eIF-3 complex specifically targets and initiates translation of a subset of mRNAs involved in cell proliferation. The protein is Eukaryotic translation initiation factor 3 subunit I (tif34) of Botryotinia fuckeliana (strain B05.10) (Noble rot fungus).